The sequence spans 92 residues: Actobindin-A (92 aa).

Disordered stretches follow at residues 1–33 (MSAPNPLLAEINKGADLKHTETQDKSAPKIGSD) and 54–92 (LKHAETDDKSAPKINENTTIKPNNHSALLGEIKAKAADS). WH2 domains are found at residues 3-20 (APNPLLAEINKGADLKHT) and 40-57 (DHASLLSEVEQGAKLKHA). Basic and acidic residues-rich tracts occupy residues 13–33 (KGADLKHTETQDKSAPKIGSD) and 54–64 (LKHAETDDKSA). Residues 68 to 79 (NENTTIKPNNHS) show a composition bias toward polar residues.

Monomer.

Is able to bind two actin monomers at high concentrations of G-actin. Inhibits actin polymerization by sequestering G-actin and stabilizing actin dimers. The chain is Actobindin-A (abnA) from Dictyostelium discoideum (Social amoeba).